The following is a 202-amino-acid chain: Lipid A acyltransferase PagP (202 aa).

The signal sequence occupies residues 1–25; that stretch reads MNYKDIINACILSGVFLLHSPSALA. Catalysis depends on residues His74, Asp117, and Ser118.

This sequence belongs to the lipid A palmitoyltransferase family. As to quaternary structure, homodimer.

Its subcellular location is the cell outer membrane. It catalyses the reaction a lipid A + a 1,2-diacyl-sn-glycero-3-phosphocholine = a hepta-acyl lipid A + a 2-acyl-sn-glycero-3-phosphocholine. The catalysed reaction is a lipid IVA + a 1,2-diacyl-sn-glycero-3-phosphocholine = a lipid IVB + a 2-acyl-sn-glycero-3-phosphocholine. The enzyme catalyses a lipid IIA + a 1,2-diacyl-sn-glycero-3-phosphocholine = a lipid IIB + a 2-acyl-sn-glycero-3-phosphocholine. Functionally, transfers a fatty acid residue from the sn-1 position of a phospholipid to the N-linked hydroxyfatty acid chain on the proximal unit of lipid A or its precursors. The chain is Lipid A acyltransferase PagP from Yersinia pseudotuberculosis serotype IB (strain PB1/+).